The following is a 308-amino-acid chain: Homogentisate phytyltransferase (308 aa).

The next 8 helical transmembrane spans lie at 13–33 (PHTI…TILG), 44–64 (LDLV…IVGL), 104–124 (LAIA…SLII), 142–162 (AALC…FLFF), 173–193 (ITPI…IAIF), 219–241 (VFRG…GLWA), 245–263 (LNTA…LLWW), and 279–299 (FYQF…LALW).

Belongs to the UbiA prenyltransferase family.

It localises to the membrane. It carries out the reaction phytyl diphosphate + homogentisate + H(+) = 2-methyl-6-phytyl-1,4-benzene-1,4-diol + CO2 + diphosphate. It functions in the pathway cofactor biosynthesis; tocopherol biosynthesis. Involved in the synthesis of tocopherol (vitamin E). Catalyzes the condensation of homogentisate and phytyl diphosphate to form dimethylphytylhydrquinone. This is Homogentisate phytyltransferase from Synechocystis sp. (strain ATCC 27184 / PCC 6803 / Kazusa).